We begin with the raw amino-acid sequence, 68 residues long: Alpha-conotoxin-like Ca1.2 (68 aa).

Positions 1 to 21 (MGMRMMFTVFLLVVLATTVVS) are cleaved as a signal peptide. Residues 22-48 (FTSDRASEGRNAAAKDKASDLVALTVR) constitute a propeptide that is removed on maturation. Cystine bridges form between C50–C56 and C51–C64. Positions 52-54 (AIR) are lacks the Ser-Xaa-Pro motif that is crucial for potent interaction with nAChR. Y63 is modified (sulfotyrosine). C64 is modified (cysteine amide). Positions 65–68 (GGIY) are excised as a propeptide.

The protein belongs to the conotoxin A superfamily. As to expression, expressed by the venom duct.

The protein localises to the secreted. Alpha-conotoxins act on postsynaptic membranes, they bind to the nicotinic acetylcholine receptors (nAChR) and thus inhibit them. Has possibly a distinct nAChR binding mode from other alpha-conotoxins, due to a different three residue motif (lacks the Ser-Xaa-Pro motif). This is Alpha-conotoxin-like Ca1.2 from Conus caracteristicus (Characteristic cone).